Consider the following 232-residue polypeptide: MRKVAKRIKDIRKDIDFNELYALKDAVSMVKERAVAKFDETIEISMNLGVDPRHADQMVRGVAHLPNGTGRNVRVAVFARGEKAEEAKASGADIVGAEDLFESINSGTIDFDRCIATPDMMLLVGRLGKILGPRNLMPNPKVGTVTLDVANAVKASKGGAVEFRVEKAGIVHAGIGKASFGVEKIVENIKAFASAVIKARPQGAKGEYIKRVAVSSTMGIGIKVDPATVCSE.

It belongs to the universal ribosomal protein uL1 family. As to quaternary structure, part of the 50S ribosomal subunit.

Binds directly to 23S rRNA. The L1 stalk is quite mobile in the ribosome, and is involved in E site tRNA release. In terms of biological role, protein L1 is also a translational repressor protein, it controls the translation of the L11 operon by binding to its mRNA. The chain is Large ribosomal subunit protein uL1 from Bartonella quintana (strain Toulouse) (Rochalimaea quintana).